Here is a 209-residue protein sequence, read N- to C-terminus: Glycerol-3-phosphate acyltransferase (209 aa).

Helical transmembrane passes span 5-25 (IIGM…LWIG), 50-70 (LGFK…TLAA), 74-94 (YFLG…ASLG), 115-135 (ILLA…IFVL), and 151-171 (AIFI…AGIL).

Belongs to the PlsY family. As to quaternary structure, probably interacts with PlsX.

Its subcellular location is the cell membrane. It catalyses the reaction an acyl phosphate + sn-glycerol 3-phosphate = a 1-acyl-sn-glycero-3-phosphate + phosphate. It functions in the pathway lipid metabolism; phospholipid metabolism. In terms of biological role, catalyzes the transfer of an acyl group from acyl-phosphate (acyl-PO(4)) to glycerol-3-phosphate (G3P) to form lysophosphatidic acid (LPA). This enzyme utilizes acyl-phosphate as fatty acyl donor, but not acyl-CoA or acyl-ACP. In Limosilactobacillus reuteri (strain DSM 20016) (Lactobacillus reuteri), this protein is Glycerol-3-phosphate acyltransferase.